The following is a 480-amino-acid chain: Cytochrome b-c1 complex subunit 1, mitochondrial (480 aa).

The transit peptide at 1-34 (MAASAVCRAACSGTQVLLRTRRSPALLRLPALRG) directs the protein to the mitochondrion. Lys111 and Lys138 each carry N6-acetyllysine. Residue Lys163 is modified to N6-acetyllysine; alternate. Residue Lys163 is modified to N6-succinyllysine; alternate. The residue at position 212 (Ser212) is a Phosphoserine. Thr214 carries the phosphothreonine modification. N6-acetyllysine is present on Lys248.

Belongs to the peptidase M16 family. UQCRC1/QCR1 subfamily. As to quaternary structure, component of the ubiquinol-cytochrome c oxidoreductase (cytochrome b-c1 complex, complex III, CIII), a multisubunit enzyme composed of 11 subunits. The complex is composed of 3 respiratory subunits cytochrome b, cytochrome c1 and Rieske protein UQCRFS1, 2 core protein subunits UQCRC1/QCR1 and UQCRC2/QCR2, and 6 low-molecular weight protein subunits UQCRH/QCR6, UQCRB/QCR7, UQCRQ/QCR8, UQCR10/QCR9, UQCR11/QCR10 and subunit 9, the cleavage product of Rieske protein UQCRFS1. The complex exists as an obligatory dimer and forms supercomplexes (SCs) in the inner mitochondrial membrane with NADH-ubiquinone oxidoreductase (complex I, CI) and cytochrome c oxidase (complex IV, CIV), resulting in different assemblies (supercomplex SCI(1)III(2)IV(1) and megacomplex MCI(2)III(2)IV(2)). Interacts with UQCC6. Interacts with STMP1. Acetylation of Lys-138 is observed in liver mitochondria from fasted mice but not from fed mice. Expressed in neurons and astrocytes of the cerebral cortex and hippocampus (at protein level).

It is found in the mitochondrion inner membrane. In terms of biological role, component of the ubiquinol-cytochrome c oxidoreductase, a multisubunit transmembrane complex that is part of the mitochondrial electron transport chain which drives oxidative phosphorylation. The respiratory chain contains 3 multisubunit complexes succinate dehydrogenase (complex II, CII), ubiquinol-cytochrome c oxidoreductase (cytochrome b-c1 complex, complex III, CIII) and cytochrome c oxidase (complex IV, CIV), that cooperate to transfer electrons derived from NADH and succinate to molecular oxygen, creating an electrochemical gradient over the inner membrane that drives transmembrane transport and the ATP synthase. The cytochrome b-c1 complex catalyzes electron transfer from ubiquinol to cytochrome c, linking this redox reaction to translocation of protons across the mitochondrial inner membrane, with protons being carried across the membrane as hydrogens on the quinol. In the process called Q cycle, 2 protons are consumed from the matrix, 4 protons are released into the intermembrane space and 2 electrons are passed to cytochrome c. The 2 core subunits UQCRC1/QCR1 and UQCRC2/QCR2 are homologous to the 2 mitochondrial-processing peptidase (MPP) subunits beta-MPP and alpha-MPP respectively, and they seem to have preserved their MPP processing properties. May be involved in the in situ processing of UQCRFS1 into the mature Rieske protein and its mitochondrial targeting sequence (MTS)/subunit 9 when incorporated into complex III. Seems to play an important role in the maintenance of proper mitochondrial function in nigral dopaminergic neurons. The sequence is that of Cytochrome b-c1 complex subunit 1, mitochondrial (Uqcrc1) from Mus musculus (Mouse).